Here is a 232-residue protein sequence, read N- to C-terminus: Sec-independent protein translocase protein TatB (232 aa).

Residues 1–21 (MFDIGFGELMLLFVIGLVVLG) form a helical membrane-spanning segment. Disordered stretches follow at residues 108–129 (EPHT…GVTP) and 176–232 (AAST…NNDR). Low complexity-rich tracts occupy residues 189 to 203 (ADSA…ATPA) and 214 to 232 (RAAT…NNDR).

This sequence belongs to the TatB family. In terms of assembly, the Tat system comprises two distinct complexes: a TatABC complex, containing multiple copies of TatA, TatB and TatC subunits, and a separate TatA complex, containing only TatA subunits. Substrates initially bind to the TatABC complex, which probably triggers association of the separate TatA complex to form the active translocon.

It is found in the cell inner membrane. Part of the twin-arginine translocation (Tat) system that transports large folded proteins containing a characteristic twin-arginine motif in their signal peptide across membranes. Together with TatC, TatB is part of a receptor directly interacting with Tat signal peptides. TatB may form an oligomeric binding site that transiently accommodates folded Tat precursor proteins before their translocation. This chain is Sec-independent protein translocase protein TatB, found in Sodalis glossinidius (strain morsitans).